Consider the following 245-residue polypeptide: Orotidine 5'-phosphate decarboxylase (245 aa).

Substrate is bound by residues Asp-22, Lys-44, 71 to 80 (DLKFHDIPNT), Thr-131, Arg-192, Gln-201, Gly-221, and Arg-222. Lys-73 (proton donor) is an active-site residue.

Belongs to the OMP decarboxylase family. Type 1 subfamily. Homodimer.

The catalysed reaction is orotidine 5'-phosphate + H(+) = UMP + CO2. The protein operates within pyrimidine metabolism; UMP biosynthesis via de novo pathway; UMP from orotate: step 2/2. Functionally, catalyzes the decarboxylation of orotidine 5'-monophosphate (OMP) to uridine 5'-monophosphate (UMP). The sequence is that of Orotidine 5'-phosphate decarboxylase from Salmonella gallinarum (strain 287/91 / NCTC 13346).